Reading from the N-terminus, the 588-residue chain is Succinate dehydrogenase flavoprotein subunit (588 aa).

Residues 14–19 (GAGGAG), 37–52 (SKVF…AQGG), and D221 each bind FAD. The residue at position 45 (H45) is a Tele-8alpha-FAD histidine. H242 and T254 together coordinate substrate. The active-site Proton acceptor is R286. H354 contributes to the substrate binding site. E388 contributes to the FAD binding site. Position 399 (R399) interacts with substrate. FAD is bound at residue 404-405 (SL).

It belongs to the FAD-dependent oxidoreductase 2 family. FRD/SDH subfamily. Part of an enzyme complex containing four subunits: a flavoprotein, an iron-sulfur, cytochrome b-556, and a hydrophobic anchor protein. The cofactor is FAD.

It is found in the cell inner membrane. It carries out the reaction a quinone + succinate = fumarate + a quinol. It participates in carbohydrate metabolism; tricarboxylic acid cycle; fumarate from succinate (bacterial route): step 1/1. Two distinct, membrane-bound, FAD-containing enzymes are responsible for the catalysis of fumarate and succinate interconversion; the fumarate reductase is used in anaerobic growth, and the succinate dehydrogenase is used in aerobic growth. The sequence is that of Succinate dehydrogenase flavoprotein subunit (sdhA) from Salmonella typhimurium (strain LT2 / SGSC1412 / ATCC 700720).